Reading from the N-terminus, the 103-residue chain is Large ribosomal subunit protein bL21 (103 aa).

It belongs to the bacterial ribosomal protein bL21 family. As to quaternary structure, part of the 50S ribosomal subunit. Contacts protein L20.

Its function is as follows. This protein binds to 23S rRNA in the presence of protein L20. The polypeptide is Large ribosomal subunit protein bL21 (Salmonella paratyphi A (strain ATCC 9150 / SARB42)).